Reading from the N-terminus, the 439-residue chain is Glutamine synthetase (439 aa).

The 82-residue stretch at 12–93 folds into the GS beta-grasp domain; that stretch reads SKIKFVQLVF…VYGFIYKDNK (82 aa). A GS catalytic domain is found at 99–439; the sequence is PRGILKRALE…EWELERYFFL (341 aa). Glu-122 and Glu-124 together coordinate Mg(2+). Glu-172 contributes to the ATP binding site. Mg(2+) contacts are provided by Glu-177 and Glu-184. Gly-229 is an L-glutamate binding site. His-233 is a binding site for Mg(2+). ATP contacts are provided by residues 235-237 and Ser-237; that span reads HIS. L-glutamate contacts are provided by Arg-283, Glu-289, and Arg-301. Positions 301, 306, and 313 each coordinate ATP. Position 318 (Glu-318) interacts with Mg(2+). Arg-320 is a binding site for L-glutamate.

Belongs to the glutamine synthetase family. In terms of assembly, oligomer of 12 subunits arranged in the form of two hexagons. Mg(2+) is required as a cofactor.

It localises to the cytoplasm. The catalysed reaction is L-glutamate + NH4(+) + ATP = L-glutamine + ADP + phosphate + H(+). Functionally, probably involved in nitrogen metabolism via ammonium assimilation. Catalyzes the ATP-dependent biosynthesis of glutamine from glutamate and ammonia. This Pyrococcus furiosus (strain ATCC 43587 / DSM 3638 / JCM 8422 / Vc1) protein is Glutamine synthetase.